A 316-amino-acid polypeptide reads, in one-letter code: tRNA-splicing endonuclease subunit Sen34 (316 aa).

Residues 120–184 are disordered; it reads QAAKKQKLEQ…PGPSNGVTPL (65 aa). Polar residues-rich tracts occupy residues 144 to 159 and 168 to 181; these read EATQ…QPSA and LDSS…SNGV. Catalysis depends on residues Y253, H261, and K292.

It belongs to the tRNA-intron endonuclease family. TRNA splicing endonuclease is a heterotetramer composed of TSEN2, TSEN15, TSEN34/LENG5 and TSEN54. tRNA splicing endonuclease complex also contains proteins of the pre-mRNA 3'-end processing machinery such as CLP1, CPSF1, CPSF4 and CSTF2.

Its subcellular location is the nucleus. It is found in the nucleolus. The enzyme catalyses pretRNA = a 3'-half-tRNA molecule with a 5'-OH end + a 5'-half-tRNA molecule with a 2',3'-cyclic phosphate end + an intron with a 2',3'-cyclic phosphate and a 5'-hydroxyl terminus.. In terms of biological role, constitutes one of the two catalytic subunit of the tRNA-splicing endonuclease complex, a complex responsible for identification and cleavage of the splice sites in pre-tRNA. It cleaves pre-tRNA at the 5'- and 3'-splice sites to release the intron. The products are an intron and two tRNA half-molecules bearing 2',3'-cyclic phosphate and 5'-OH termini. There are no conserved sequences at the splice sites, but the intron is invariably located at the same site in the gene, placing the splice sites an invariant distance from the constant structural features of the tRNA body. The tRNA splicing endonuclease is also involved in mRNA processing via its association with pre-mRNA 3'-end processing factors, establishing a link between pre-tRNA splicing and pre-mRNA 3'-end formation, suggesting that the endonuclease subunits function in multiple RNA-processing events. The protein is tRNA-splicing endonuclease subunit Sen34 (Tsen34) of Mus musculus (Mouse).